The sequence spans 1245 residues: ATP-dependent helicase/deoxyribonuclease subunit B (1245 aa).

A disordered region spans residues 737–758 (WDDQNNAPTTDLPDRPNPRASE). Residues 748–758 (LPDRPNPRASE) show a composition bias toward basic and acidic residues.

Belongs to the helicase family. AddB/RexB type 2 subfamily. In terms of assembly, heterodimer of AddA and RexB. Mg(2+) serves as cofactor.

Functionally, the heterodimer acts as both an ATP-dependent DNA helicase and an ATP-dependent, dual-direction single-stranded exonuclease. Recognizes the chi site generating a DNA molecule suitable for the initiation of homologous recombination. This subunit has 5' -&gt; 3' nuclease activity but not helicase activity. The sequence is that of ATP-dependent helicase/deoxyribonuclease subunit B from Limosilactobacillus fermentum (strain NBRC 3956 / LMG 18251) (Lactobacillus fermentum).